We begin with the raw amino-acid sequence, 222 residues long: Small ribosomal subunit protein eS8z (222 aa).

Disordered regions lie at residues 1–37 (MGISRDSIHKRRATGGKQKQWRKKRKYEMGRQPANTK) and 125–147 (KKKSASSTKKDGEEGEEAAVAAP). The segment covering 8–26 (IHKRRATGGKQKQWRKKRK) has biased composition (basic residues).

It belongs to the eukaryotic ribosomal protein eS8 family.

This chain is Small ribosomal subunit protein eS8z (RPS8A), found in Arabidopsis thaliana (Mouse-ear cress).